Here is an 880-residue protein sequence, read N- to C-terminus: Calcium-transporting ATPase lmo0841 (880 aa).

The next 4 helical transmembrane spans lie at 47–67, 68–88, 243–263, and 271–291; these read LWKL…VIAA, LVQL…VLIV, LGLG…GRVL, and MATA…AAIP. Valine 287, alanine 288, isoleucine 290, and glutamate 292 together coordinate Ca(2+). Aspartate 334 (4-aspartylphosphate intermediate) is an active-site residue. Transmembrane regions (helical) follow at residues 681-701, 707-727, 756-776, 819-839, and 854-874; these read IAYL…ALVL, FTAL…AIAL, AVIS…YIGM, YVIG…LPGA, and WSIA…IKVV. Asparagine 716 and aspartate 720 together coordinate Ca(2+).

It belongs to the cation transport ATPase (P-type) (TC 3.A.3) family. Type IIA subfamily.

Its subcellular location is the cell membrane. The catalysed reaction is Ca(2+)(in) + ATP + H2O = Ca(2+)(out) + ADP + phosphate + H(+). With respect to regulation, phosphorylation is inhibited by EGTA and vanadate. ATPase activity is stimulated by Sr(2+). Inhibited by very high concentrations of cyclopiazonic acid (CPA). Its function is as follows. Catalyzes the hydrolysis of ATP coupled with the transport of calcium. The transport is electrogenic with a probable ATP:Ca(2+):H(+) stoichiometry of 1:1:1. May have an important role in survival of the bacterium when stressed by a combination of a high calcium concentration and alkaline pH. The sequence is that of Calcium-transporting ATPase lmo0841 from Listeria monocytogenes serovar 1/2a (strain ATCC BAA-679 / EGD-e).